The sequence spans 217 residues: Probable transaldolase (217 aa).

The Schiff-base intermediate with substrate role is filled by lysine 83.

Belongs to the transaldolase family. Type 3B subfamily.

The protein localises to the cytoplasm. It catalyses the reaction D-sedoheptulose 7-phosphate + D-glyceraldehyde 3-phosphate = D-erythrose 4-phosphate + beta-D-fructose 6-phosphate. The protein operates within carbohydrate degradation; pentose phosphate pathway; D-glyceraldehyde 3-phosphate and beta-D-fructose 6-phosphate from D-ribose 5-phosphate and D-xylulose 5-phosphate (non-oxidative stage): step 2/3. Functionally, transaldolase is important for the balance of metabolites in the pentose-phosphate pathway. The protein is Probable transaldolase of Brucella anthropi (strain ATCC 49188 / DSM 6882 / CCUG 24695 / JCM 21032 / LMG 3331 / NBRC 15819 / NCTC 12168 / Alc 37) (Ochrobactrum anthropi).